The following is a 148-amino-acid chain: Protein TIFY 5B (148 aa).

The region spanning 54-89 (PKQESQILTIFYNGHMCVSSDLTHLEANAILSLASR) is the Tify domain.

It belongs to the TIFY/JAZ family. In terms of processing, ubiquitinated. Targeted for degradation by the SCF(COI1) E3 ubiquitin ligase-proteasome pathway during jasmonate signaling.

Its subcellular location is the nucleus. In terms of biological role, repressor of jasmonate responses. The chain is Protein TIFY 5B (TIFY 5B) from Arabidopsis thaliana (Mouse-ear cress).